Here is a 467-residue protein sequence, read N- to C-terminus: Serine decarboxylase 2 (467 aa).

H178 provides a ligand contact to substrate. At K290 the chain carries N6-(pyridoxal phosphate)lysine.

Belongs to the group II decarboxylase family. It depends on pyridoxal 5'-phosphate as a cofactor.

It carries out the reaction L-serine + H(+) = ethanolamine + CO2. Functionally, catalyzes the biosynthesis of ethanolamine from serine. Decarboxylation of free serine is the major source of ethanolamine production in plants and ethanolamine metabolism is crucial for the synthesis of choline, phosphatidylethanolamine (PE) and phosphatidylcholine (PC), and thus for plant growth. This chain is Serine decarboxylase 2, found in Oryza sativa subsp. japonica (Rice).